Reading from the N-terminus, the 299-residue chain is tRNA dimethylallyltransferase (299 aa).

13-20 contacts ATP; it reads GPTASGKT. A substrate-binding site is contributed by 15 to 20; that stretch reads TASGKT. The interaction with substrate tRNA stretch occupies residues 38–41; the sequence is DSRQ.

The protein belongs to the IPP transferase family. In terms of assembly, monomer. Requires Mg(2+) as cofactor.

It carries out the reaction adenosine(37) in tRNA + dimethylallyl diphosphate = N(6)-dimethylallyladenosine(37) in tRNA + diphosphate. Functionally, catalyzes the transfer of a dimethylallyl group onto the adenine at position 37 in tRNAs that read codons beginning with uridine, leading to the formation of N6-(dimethylallyl)adenosine (i(6)A). The polypeptide is tRNA dimethylallyltransferase (Prochlorococcus marinus (strain SARG / CCMP1375 / SS120)).